Consider the following 69-residue polypeptide: UPF0346 protein llmg_2280 (69 aa).

It belongs to the UPF0346 family.

This is UPF0346 protein llmg_2280 from Lactococcus lactis subsp. cremoris (strain MG1363).